A 385-amino-acid polypeptide reads, in one-letter code: S-adenosylmethionine synthase (385 aa).

His-16 is an ATP binding site. Asp-18 is a binding site for Mg(2+). A K(+)-binding site is contributed by Glu-44. 2 residues coordinate L-methionine: Glu-57 and Gln-100. A flexible loop region spans residues Gln-100–Arg-110. ATP is bound by residues Asp-164–Lys-166, Lys-230–Phe-231, Asp-239, Arg-245–Lys-246, Ala-262, and Lys-266. Asp-239 is a binding site for L-methionine. Lys-270 is a binding site for L-methionine.

Belongs to the AdoMet synthase family. As to quaternary structure, homotetramer; dimer of dimers. Mg(2+) serves as cofactor. Requires K(+) as cofactor.

It localises to the cytoplasm. It carries out the reaction L-methionine + ATP + H2O = S-adenosyl-L-methionine + phosphate + diphosphate. Its pathway is amino-acid biosynthesis; S-adenosyl-L-methionine biosynthesis; S-adenosyl-L-methionine from L-methionine: step 1/1. Catalyzes the formation of S-adenosylmethionine (AdoMet) from methionine and ATP. The overall synthetic reaction is composed of two sequential steps, AdoMet formation and the subsequent tripolyphosphate hydrolysis which occurs prior to release of AdoMet from the enzyme. The chain is S-adenosylmethionine synthase from Helicobacter pylori (strain Shi470).